The following is a 353-amino-acid chain: Protein RecA (353 aa).

67 to 74 (GPESSGKT) provides a ligand contact to ATP.

The protein belongs to the RecA family.

It is found in the cytoplasm. In terms of biological role, can catalyze the hydrolysis of ATP in the presence of single-stranded DNA, the ATP-dependent uptake of single-stranded DNA by duplex DNA, and the ATP-dependent hybridization of homologous single-stranded DNAs. It interacts with LexA causing its activation and leading to its autocatalytic cleavage. The protein is Protein RecA of Salmonella paratyphi A (strain ATCC 9150 / SARB42).